A 492-amino-acid polypeptide reads, in one-letter code: NAD(P)H-quinone oxidoreductase subunit 2 A, chloroplastic (492 aa).

The next 13 membrane-spanning stretches (helical) occupy residues 6-26 (LLLF…GLIL), 39-59 (TPWL…ALLF), 81-101 (VFQF…VEYI), 106-126 (MAIT…MFLC), 131-151 (LITI…LSGY), 165-185 (YLLM…WLYG), 209-229 (PGIS…LSPA), 277-297 (WHLL…LIAI), 305-325 (MLAY…IVGD), 329-349 (GYAS…GTFA), 377-397 (ALSS…AGFF), 400-420 (LHLF…IGLL), and 466-486 (MIVC…IIAI).

It belongs to the complex I subunit 2 family. NDH is composed of at least 16 different subunits, 5 of which are encoded in the nucleus.

It localises to the plastid. The protein resides in the chloroplast thylakoid membrane. It catalyses the reaction a plastoquinone + NADH + (n+1) H(+)(in) = a plastoquinol + NAD(+) + n H(+)(out). The enzyme catalyses a plastoquinone + NADPH + (n+1) H(+)(in) = a plastoquinol + NADP(+) + n H(+)(out). Functionally, NDH shuttles electrons from NAD(P)H:plastoquinone, via FMN and iron-sulfur (Fe-S) centers, to quinones in the photosynthetic chain and possibly in a chloroplast respiratory chain. The immediate electron acceptor for the enzyme in this species is believed to be plastoquinone. Couples the redox reaction to proton translocation, and thus conserves the redox energy in a proton gradient. The protein is NAD(P)H-quinone oxidoreductase subunit 2 A, chloroplastic of Illicium oligandrum (Star anise).